Here is a 237-residue protein sequence, read N- to C-terminus: Ras modification protein ERF4 (237 aa).

It belongs to the ERF4 family. In terms of assembly, interacts with ERF2.

The protein resides in the endoplasmic reticulum membrane. Its function is as follows. The ERF2-SHR5 complex is a palmitoyltransferase specific for Ras proteins. Palmitoylates RAS2, which is required for its proper plasma membrane localization. The protein is Ras modification protein ERF4 (SHR5) of Saccharomyces cerevisiae (strain ATCC 204508 / S288c) (Baker's yeast).